A 494-amino-acid chain; its full sequence is 4-trimethylaminobutyraldehyde dehydrogenase (494 aa).

N-acetylserine is present on Ser-2. Lys-30 carries the post-translational modification N6-acetyllysine; alternate. Lys-30 is modified (N6-succinyllysine; alternate). Position 59 is an N6-succinyllysine (Lys-59). NAD(+)-binding positions include Lys-180 and 232–236 (GSVPT). The active-site Proton acceptor is the Glu-254. Cys-288 serves as the catalytic Nucleophile. An N6-acetyllysine mark is found at Lys-298 and Lys-344. Glu-391 contributes to the NAD(+) binding site.

The protein belongs to the aldehyde dehydrogenase family. As to quaternary structure, homotetramer.

It is found in the cytoplasm. The protein localises to the cytosol. It catalyses the reaction 4-(trimethylamino)butanal + NAD(+) + H2O = 4-(trimethylamino)butanoate + NADH + 2 H(+). The catalysed reaction is an aldehyde + NAD(+) + H2O = a carboxylate + NADH + 2 H(+). It carries out the reaction 4-aminobutanal + NAD(+) + H2O = 4-aminobutanoate + NADH + 2 H(+). The enzyme catalyses formaldehyde + NAD(+) + H2O = formate + NADH + 2 H(+). It catalyses the reaction acetaldehyde + NAD(+) + H2O = acetate + NADH + 2 H(+). The catalysed reaction is imidazole-4-acetaldehyde + NAD(+) + H2O = imidazole-4-acetate + NADH + 2 H(+). It carries out the reaction acrolein + NAD(+) + H2O = acrylate + NADH + 2 H(+). The enzyme catalyses (5-hydroxyindol-3-yl)acetaldehyde + NAD(+) + H2O = (5-hydroxyindol-3-yl)acetate + NADH + 2 H(+). It catalyses the reaction 3,4-dihydroxyphenylacetaldehyde + NAD(+) + H2O = 3,4-dihydroxyphenylacetate + NADH + 2 H(+). The catalysed reaction is spermine monoaldehyde + NAD(+) + H2O = N-(2-carboxyethyl)spermidine + NADH + 2 H(+). It carries out the reaction propanal + NAD(+) + H2O = propanoate + NADH + 2 H(+). The enzyme catalyses butanal + NAD(+) + H2O = butanoate + NADH + 2 H(+). It catalyses the reaction pentanal + NAD(+) + H2O = pentanoate + NADH + 2 H(+). The catalysed reaction is hexanal + NAD(+) + H2O = hexanoate + NADH + 2 H(+). It functions in the pathway amine and polyamine biosynthesis; carnitine biosynthesis. In terms of biological role, converts gamma-trimethylaminobutyraldehyde into gamma-butyrobetaine with high efficiency (in vitro). Can catalyze the irreversible oxidation of a broad range of aldehydes to the corresponding acids in an NAD-dependent reaction, but with low efficiency. Catalyzes the oxidation of aldehydes arising from biogenic amines and polyamines. This Bos taurus (Bovine) protein is 4-trimethylaminobutyraldehyde dehydrogenase (ALDH9A1).